Reading from the N-terminus, the 182-residue chain is Inosine/xanthosine triphosphatase (182 aa).

Mg(2+)-binding residues include D38 and E68. 68-69 (EA) lines the substrate pocket.

This sequence belongs to the YjjX NTPase family. As to quaternary structure, homodimer. The cofactor is Mg(2+). Mn(2+) is required as a cofactor.

The enzyme catalyses XTP + H2O = XDP + phosphate + H(+). The catalysed reaction is ITP + H2O = IDP + phosphate + H(+). Phosphatase that hydrolyzes non-canonical purine nucleotides such as XTP and ITP to their respective diphosphate derivatives. Probably excludes non-canonical purines from DNA/RNA precursor pool, thus preventing their incorporation into DNA/RNA and avoiding chromosomal lesions. This is Inosine/xanthosine triphosphatase from Erwinia tasmaniensis (strain DSM 17950 / CFBP 7177 / CIP 109463 / NCPPB 4357 / Et1/99).